Consider the following 70-residue polypeptide: Putative venom toxin Ts29 (70 aa).

The signal sequence occupies residues 1-20; sequence MSPLFVVLLIATTTFYHSDA.

As to expression, expressed by the venom gland.

Its subcellular location is the secreted. The chain is Putative venom toxin Ts29 from Tityus serrulatus (Brazilian scorpion).